The chain runs to 699 residues: tRNA 5-methylaminomethyl-2-thiouridine biosynthesis bifunctional protein MnmC (699 aa).

The segment at 1-260 (MTAKPQKSCQ…ERKLLRQQAD (260 aa)) is tRNA (mnm(5)s(2)U34)-methyltransferase. Residues 282–699 (VGGGLASANL…LRKLLKGKAL (418 aa)) are FAD-dependent cmnm(5)s(2)U34 oxidoreductase.

In the N-terminal section; belongs to the methyltransferase superfamily. tRNA (mnm(5)s(2)U34)-methyltransferase family. It in the C-terminal section; belongs to the DAO family. It depends on FAD as a cofactor.

The protein localises to the cytoplasm. It carries out the reaction 5-aminomethyl-2-thiouridine(34) in tRNA + S-adenosyl-L-methionine = 5-methylaminomethyl-2-thiouridine(34) in tRNA + S-adenosyl-L-homocysteine + H(+). Its function is as follows. Catalyzes the last two steps in the biosynthesis of 5-methylaminomethyl-2-thiouridine (mnm(5)s(2)U) at the wobble position (U34) in tRNA. Catalyzes the FAD-dependent demodification of cmnm(5)s(2)U34 to nm(5)s(2)U34, followed by the transfer of a methyl group from S-adenosyl-L-methionine to nm(5)s(2)U34, to form mnm(5)s(2)U34. The sequence is that of tRNA 5-methylaminomethyl-2-thiouridine biosynthesis bifunctional protein MnmC from Shewanella sp. (strain MR-4).